The following is a 118-amino-acid chain: Large ribosomal subunit protein bL19 (118 aa).

The protein belongs to the bacterial ribosomal protein bL19 family.

Its function is as follows. This protein is located at the 30S-50S ribosomal subunit interface and may play a role in the structure and function of the aminoacyl-tRNA binding site. The sequence is that of Large ribosomal subunit protein bL19 from Campylobacter jejuni subsp. doylei (strain ATCC BAA-1458 / RM4099 / 269.97).